The chain runs to 162 residues: Ribonuclease (162 aa).

An N-terminal signal peptide occupies residues 1–29; it reads MKKISSVFTMFALIAAILFSGFIPQQAYA. Residues 30 to 53 constitute a propeptide that is removed on maturation; that stretch reads ETTLTPTATNKTASIQLTSDVHTL. The Proton acceptor role is filled by E125. H154 functions as the Proton donor in the catalytic mechanism.

The protein belongs to the ribonuclease N1/T1 family.

Its subcellular location is the secreted. Functionally, this is a purine-specific ribonuclease. The protein is Ribonuclease of Bacillus pumilus (Bacillus mesentericus).